We begin with the raw amino-acid sequence, 476 residues long: Protein transport protein Sec61 subunit alpha (476 aa).

The Cytoplasmic portion of the chain corresponds to 2 to 33 (GIKFLEVIKPFCAVLPEIQKPERKIQFREKVL). A helical membrane pass occupies residues 34–53 (WTAITLFIFLVCCQIPLFGI). At 54-76 (MSSDSADPFYWMRVILASNRGTL) the chain is on the lumenal side. A helical transmembrane segment spans residues 77–96 (MELGISPIVTSGLIMQLLAG). Residues 97-117 (AKIIEVGDTPKDRALFNGAQK) are Cytoplasmic-facing. A helical membrane pass occupies residues 118-138 (LFGMIITIGQAIVYVMTGMYG). Residues 139 to 144 (DPSEMG) lie on the Lumenal side of the membrane. The helical transmembrane segment at 145–165 (AGICLVIIIQLFVAGLIVLLL) threads the bilayer. Topologically, residues 166 to 172 (DELLQKG) are cytoplasmic. The helical transmembrane segment at 173-193 (YGLGSGISLFIATNICETIVW) threads the bilayer. Residues 194 to 240 (KAFSPTTVNTGRGTEFEGAIIALFHLLATRTDKVRALREAFYRQNLP) lie on the Lumenal side of the membrane. A helical membrane pass occupies residues 241–261 (NLMNLIATVFVFAVVIYFQGF). Over 262 to 288 (RVDLPIKSARYRGQYNTYPIKLFYTSN) the chain is Cytoplasmic. The chain crosses the membrane as a helical span at residues 289 to 309 (IPIILQSALVSNLYVISQMLS). The Lumenal segment spans residues 310–354 (TRFSGNFLVNLLGTWSDTSTGGPARAYPVGGLCYYFSPPESFGSV). The helical transmembrane segment at 355–375 (LDDPVHASIYIVFMLGSCAFF) threads the bilayer. The Cytoplasmic segment spans residues 376–420 (SKTWIEVSGSSAKDVAKQLKEQQMVMRGHRETSMVHELNRYIPTA). The chain crosses the membrane as a helical span at residues 421–441 (AAFGGLCIGGLSVMADFLGAI). The Lumenal segment spans residues 442 to 445 (GSGT). Residues 446–462 (GILLAVTIIYQYFEIFV) form a helical membrane-spanning segment. The Cytoplasmic segment spans residues 463–476 (KEQSEMGSMGALLF).

This sequence belongs to the SecY/SEC61-alpha family. As to quaternary structure, the SEC61 channel-forming translocon complex consists of channel-forming core components SEC61A1, SEC61B and SEC61G and different auxiliary components such as SEC62 and SEC63. The SEC61 channel associates with the multi-pass translocon (MPT) complex.

It localises to the endoplasmic reticulum membrane. In terms of biological role, component of SEC61 channel-forming translocon complex that mediates transport of signal peptide-containing precursor polypeptides across the endoplasmic reticulum (ER). Forms a ribosome receptor and a gated pore in the ER membrane, both functions required for cotranslational translocation of nascent polypeptides. May cooperate with auxiliary protein SEC62, SEC63 and HSPA5/BiP to enable post-translational transport of small presecretory proteins. The SEC61 channel is also involved in ER membrane insertion of transmembrane proteins: it mediates membrane insertion of the first few transmembrane segments of proteins, while insertion of subsequent transmembrane regions of multi-pass membrane proteins is mediated by the multi-pass translocon (MPT) complex. The chain is Protein transport protein Sec61 subunit alpha (sec61a) from Gadus ogac (Greenland cod).